The primary structure comprises 300 residues: tRNA pseudouridine synthase B (300 aa).

The Nucleophile role is filled by D38.

This sequence belongs to the pseudouridine synthase TruB family. Type 1 subfamily.

The catalysed reaction is uridine(55) in tRNA = pseudouridine(55) in tRNA. Responsible for synthesis of pseudouridine from uracil-55 in the psi GC loop of transfer RNAs. The chain is tRNA pseudouridine synthase B from Anaplasma phagocytophilum (strain HZ).